The sequence spans 422 residues: Solute carrier family 35 member D3 (422 aa).

10 helical membrane passes run 9–29 (VLGISVAIAHGVFSGSLNILL), 38–58 (FSFLTLVQCLTSSTAALSLEL), 64–84 (LIAVPPFGLSLARSFAGVAVL), 103–123 (MYVVFKRCLPLVTMLIGVLVL), 131–151 (GVLAAVLITTCGAALAGAGDL), 155–175 (PIGYVTGVLAVLVHAAYLVLI), 187–207 (LTAQYVIAVSATPLLVICSFA), 224–244 (AMVSIFVACILIGCAMNFTTL), 257–277 (FVGVVKSIATITVGMVAFSDV), and 280–300 (TSLFIAGVVVNTLGSIIYCVA). Residues 339 to 365 (AKSGNSEPESAEGAGDSVQQGGQESRG) are disordered. The segment covering 355–364 (SVQQGGQESR) has biased composition (polar residues).

This sequence belongs to the TPT transporter family. SLC35D subfamily. Could interact with ATG14, BECN1 and PIK3C3 that form the PI3KC3-C1/AIC/autophagy initiation complex; enhancing the formation of the AIC and promoting autophagy. In terms of tissue distribution, expressed in brain. Expressed in subsets of dopaminergic neurons. Expressed in maturing megakaryocytes.

It localises to the cytoplasmic vesicle. It is found in the secretory vesicle. Its subcellular location is the synaptic vesicle membrane. The protein resides in the early endosome membrane. The protein localises to the endoplasmic reticulum membrane. It catalyses the reaction UDP-alpha-D-glucose(in) = UDP-alpha-D-glucose(out). Its activity is regulated as follows. Inhibited by proton uncouplers that directly abolish the proton electrochemical gradient. In terms of biological role, probable UDP-glucose transmembrane transporter involved in UDP-glucose transport from the cytosol to the lumen of synaptic vesicles. It is involved in platelet dense granules maturation. Its function is as follows. Alternatively, could function as a molecular adapter enhancing the formation of the PI3KC3-C1/AIC/autophagy initiation complex to promote autophagy in dopaminergic neurons. Could also regulate the plasma membrane localization of the D(1A) dopamine receptor/DRD1 and dopamine signaling. This Mus musculus (Mouse) protein is Solute carrier family 35 member D3.